A 311-amino-acid polypeptide reads, in one-letter code: Methionyl-tRNA formyltransferase (311 aa).

Residue 109-112 coordinates (6S)-5,6,7,8-tetrahydrofolate; that stretch reads SLLP.

The protein belongs to the Fmt family.

The catalysed reaction is L-methionyl-tRNA(fMet) + (6R)-10-formyltetrahydrofolate = N-formyl-L-methionyl-tRNA(fMet) + (6S)-5,6,7,8-tetrahydrofolate + H(+). Its function is as follows. Attaches a formyl group to the free amino group of methionyl-tRNA(fMet). The formyl group appears to play a dual role in the initiator identity of N-formylmethionyl-tRNA by promoting its recognition by IF2 and preventing the misappropriation of this tRNA by the elongation apparatus. The polypeptide is Methionyl-tRNA formyltransferase (Acetivibrio thermocellus (strain ATCC 27405 / DSM 1237 / JCM 9322 / NBRC 103400 / NCIMB 10682 / NRRL B-4536 / VPI 7372) (Clostridium thermocellum)).